The chain runs to 129 residues: Small ribosomal subunit protein uS11 (129 aa).

The protein belongs to the universal ribosomal protein uS11 family. Part of the 30S ribosomal subunit. Interacts with proteins S7 and S18. Binds to IF-3.

In terms of biological role, located on the platform of the 30S subunit, it bridges several disparate RNA helices of the 16S rRNA. Forms part of the Shine-Dalgarno cleft in the 70S ribosome. The chain is Small ribosomal subunit protein uS11 from Parvibaculum lavamentivorans (strain DS-1 / DSM 13023 / NCIMB 13966).